Reading from the N-terminus, the 84-residue chain is Cell division topological specificity factor (84 aa).

It belongs to the MinE family.

Its function is as follows. Prevents the cell division inhibition by proteins MinC and MinD at internal division sites while permitting inhibition at polar sites. This ensures cell division at the proper site by restricting the formation of a division septum at the midpoint of the long axis of the cell. In Pseudomonas aeruginosa (strain LESB58), this protein is Cell division topological specificity factor.